A 178-amino-acid polypeptide reads, in one-letter code: Adenine phosphoribosyltransferase (178 aa).

This sequence belongs to the purine/pyrimidine phosphoribosyltransferase family. As to quaternary structure, homodimer.

The protein localises to the cytoplasm. The enzyme catalyses AMP + diphosphate = 5-phospho-alpha-D-ribose 1-diphosphate + adenine. Its pathway is purine metabolism; AMP biosynthesis via salvage pathway; AMP from adenine: step 1/1. Its function is as follows. Catalyzes a salvage reaction resulting in the formation of AMP, that is energically less costly than de novo synthesis. The sequence is that of Adenine phosphoribosyltransferase from Cereibacter sphaeroides (strain ATCC 17023 / DSM 158 / JCM 6121 / CCUG 31486 / LMG 2827 / NBRC 12203 / NCIMB 8253 / ATH 2.4.1.) (Rhodobacter sphaeroides).